Consider the following 88-residue polypeptide: Synaptonemal complex central element protein 3 (88 aa).

Positions Glu-8–Lys-75 form a coiled coil.

In terms of assembly, homodimer. Can form higher-order homooligomers. Interacts with SYCP1 (via tetrameric core); the interaction remodels SYCP1 homotetramers to 2:1 heterotrimers with SYCE3. SYCP1/SYCE3 heterotrimers form lattice assemblies as part of the mature synaptonemal complex via both lateral and head-to-head interactions. Interacts with the SYCE1-SIX6OS1 complex; the interaction recruits the SYCE1-SIX6OS1 complex to the central element of the synaptonemal complex. Interacts with the SYCE2-TEX12 complex; the interaction promotes fibrous assembly of SYCE2-TEX12 as part of the synaptonemal complex central element. Interacts with SYCE1. Interacts with SYCE2. Interacts with proteasome subunit PSMA8; to participate in meiosis progression during spermatogenesis. Interacts with SPO16. As to expression, expression is restricted to spermatocytes and is absent in spermatogonia, spermatids and spermatogonia (at protein level). Expressed in adult testis and embryonic ovary. Expressed in the convoluted seminiferous tubules in spermatogonia and spermatocytes.

The protein resides in the nucleus. Its subcellular location is the chromosome. In terms of biological role, major component of the transverse central element of synaptonemal complexes (SCS), formed between homologous chromosomes during meiotic prophase. Required for the assembly of the central element of the synaptonemal complex during meiosis, via remodeling of SYCP1 lattice structures and promoting recruitment of SYCE2-TEX12 and SYCE1-SIX60S1 complexes. Required for chromosome loading of the central element-specific SCS proteins, and for initiating synapsis between homologous chromosomes. Chromosome loading appears to require SYCP1. Required for fertility and normal testis development. May play a role in apoptosis of spermatogenic cells and pathogenesis of cryptorchidism. This Mus musculus (Mouse) protein is Synaptonemal complex central element protein 3.